We begin with the raw amino-acid sequence, 144 residues long: Ribosomal RNA large subunit methyltransferase H (144 aa).

S-adenosyl-L-methionine-binding positions include Leu-63, Gly-92, and 111-116; that span reads LSPMTF.

Belongs to the RNA methyltransferase RlmH family. In terms of assembly, homodimer.

The protein resides in the cytoplasm. The enzyme catalyses pseudouridine(1915) in 23S rRNA + S-adenosyl-L-methionine = N(3)-methylpseudouridine(1915) in 23S rRNA + S-adenosyl-L-homocysteine + H(+). Functionally, specifically methylates the pseudouridine at position 1915 (m3Psi1915) in 23S rRNA. This chain is Ribosomal RNA large subunit methyltransferase H, found in Synechococcus sp. (strain CC9605).